A 166-amino-acid polypeptide reads, in one-letter code: Protein-export protein SecB (166 aa).

It belongs to the SecB family. As to quaternary structure, homotetramer, a dimer of dimers. One homotetramer interacts with 1 SecA dimer.

The protein localises to the cytoplasm. In terms of biological role, one of the proteins required for the normal export of preproteins out of the cell cytoplasm. It is a molecular chaperone that binds to a subset of precursor proteins, maintaining them in a translocation-competent state. It also specifically binds to its receptor SecA. The chain is Protein-export protein SecB from Acidiphilium cryptum (strain JF-5).